Consider the following 280-residue polypeptide: Coiled-coil domain-containing protein 106 (280 aa).

Residues 63–101 are a coiled coil; the sequence is TQLHMALERNSWLQKRIEDLEEERDFLRCQLDKFISSAR. Residues 103 to 121 are compositionally biased toward basic and acidic residues; it reads EAEDHCRMKPGPRRMEGDS. The disordered stretch occupies residues 103 to 176; sequence EAEDHCRMKP…KPKARERQRV (74 aa). Ser-130 carries the phosphoserine modification. A compositionally biased stretch (low complexity) spans 133-146; sequence ESAASSLSGASEEG. A Bipartite nuclear localization signal motif is present at residues 151 to 164; it reads RRRQKQKGGASRRR. The segment covering 152–168 has biased composition (basic residues); it reads RRQKQKGGASRRRFGKP.

Interacts with p53/TP53.

Its subcellular location is the nucleus. Promotes the degradation of p53/TP53 protein and inhibits its transactivity. The polypeptide is Coiled-coil domain-containing protein 106 (CCDC106) (Homo sapiens (Human)).